We begin with the raw amino-acid sequence, 414 residues long: Serine hydroxymethyltransferase (414 aa).

Residues leucine 118 and 122-124 contribute to the (6S)-5,6,7,8-tetrahydrofolate site; that span reads GHL. Lysine 226 bears the N6-(pyridoxal phosphate)lysine mark. 353-355 contributes to the (6S)-5,6,7,8-tetrahydrofolate binding site; sequence SPF.

This sequence belongs to the SHMT family. Homodimer. Pyridoxal 5'-phosphate serves as cofactor.

The protein localises to the cytoplasm. The enzyme catalyses (6R)-5,10-methylene-5,6,7,8-tetrahydrofolate + glycine + H2O = (6S)-5,6,7,8-tetrahydrofolate + L-serine. Its pathway is one-carbon metabolism; tetrahydrofolate interconversion. It participates in amino-acid biosynthesis; glycine biosynthesis; glycine from L-serine: step 1/1. In terms of biological role, catalyzes the reversible interconversion of serine and glycine with tetrahydrofolate (THF) serving as the one-carbon carrier. This reaction serves as the major source of one-carbon groups required for the biosynthesis of purines, thymidylate, methionine, and other important biomolecules. Also exhibits THF-independent aldolase activity toward beta-hydroxyamino acids, producing glycine and aldehydes, via a retro-aldol mechanism. The sequence is that of Serine hydroxymethyltransferase from Blochmanniella floridana.